We begin with the raw amino-acid sequence, 75 residues long: Exodeoxyribonuclease 7 small subunit (75 aa).

Belongs to the XseB family. In terms of assembly, heterooligomer composed of large and small subunits.

The protein resides in the cytoplasm. It catalyses the reaction Exonucleolytic cleavage in either 5'- to 3'- or 3'- to 5'-direction to yield nucleoside 5'-phosphates.. Functionally, bidirectionally degrades single-stranded DNA into large acid-insoluble oligonucleotides, which are then degraded further into small acid-soluble oligonucleotides. In Citrifermentans bemidjiense (strain ATCC BAA-1014 / DSM 16622 / JCM 12645 / Bem) (Geobacter bemidjiensis), this protein is Exodeoxyribonuclease 7 small subunit.